The sequence spans 527 residues: UDP-glucuronosyltransferase 2A3 (527 aa).

Residues 1-23 (MRSDKSALVFLLLQLFCVGCGFC) form the signal peptide. Residues 24–491 (GKVLVWPCDM…TWFQHYSIDV (468 aa)) are Extracellular-facing. Asn313 carries N-linked (GlcNAc...) asparagine glycosylation. Residues 492-512 (IGFLLACVATAIFLFTKCFLF) form a helical membrane-spanning segment. Topologically, residues 513 to 527 (SCQKFNKTRKIEKRE) are cytoplasmic.

The protein belongs to the UDP-glycosyltransferase family.

Its subcellular location is the membrane. It carries out the reaction glucuronate acceptor + UDP-alpha-D-glucuronate = acceptor beta-D-glucuronoside + UDP + H(+). UDP-glucuronosyltransferases catalyze phase II biotransformation reactions in which lipophilic substrates are conjugated with glucuronic acid to increase water solubility and enhance excretion. They are of major importance in the conjugation and subsequent elimination of potentially toxic xenobiotics and endogenous compounds. The chain is UDP-glucuronosyltransferase 2A3 (UGT2A3) from Homo sapiens (Human).